The following is a 537-amino-acid chain: Probable glucomannan 4-beta-mannosyltransferase 15 (537 aa).

The helical transmembrane segment at F50 to F70 threads the bilayer. The active site involves D150. Substrate contacts are provided by D209 and D211. Residue D303 is part of the active site. The next 4 helical transmembrane spans lie at I382–L402, V418–V438, E494–A514, and F515–V535.

The protein belongs to the glycosyltransferase 2 family. Plant cellulose synthase-like A subfamily.

Its subcellular location is the golgi apparatus membrane. It catalyses the reaction GDP-mannose + (glucomannan)n = GDP + (glucomannan)n+1.. Probable mannan synthase which consists of a 4-beta-mannosyltransferase activity on mannan using GDP-mannose. The beta-1,4-mannan product is the backbone for galactomannan synthesis by galactomannan galactosyltransferase. Galactomannan is a noncellulosic polysaccharides of plant cell wall. This Arabidopsis thaliana (Mouse-ear cress) protein is Probable glucomannan 4-beta-mannosyltransferase 15.